The primary structure comprises 273 residues: MKNLFFSAYKKVFSYITSIVIFMVSLPYAYSQDVVVNTTKHLFTVKIGTTRVIYPSSSTKGVSVSVANPQDYPILVQTQVKDEDKTSPAPFIVTPPLFRLDAGLQGRVRIIRTGGKFPEDRETLQWLCLTGIPPKNGDAWGNTQNNPKNSSPTMDIQMSISTCIKLLFRPDKVKGDPTDSADSLTWRYKGNYLEVNNPTPFYMNFYSLRIGDEKINLSDLGSKDEIKNGSYVPPFSSRDFIIPVKNKGKATEVFWQVINDNGGVSREFKSTVQ.

The signal sequence occupies residues Met1 to Ser31. Residues Cys128 and Cys163 are joined by a disulfide bond.

It belongs to the periplasmic pilus chaperone family.

It is found in the periplasm. In terms of biological role, required for the biogenesis of the pH 6 antigen. The chain is Chaperone protein PsaB (psaB) from Yersinia pestis.